The primary structure comprises 181 residues: Large ribosomal subunit protein uL5 (181 aa).

The protein belongs to the universal ribosomal protein uL5 family. Part of the 50S ribosomal subunit; contacts the 5S rRNA and probably tRNA. Forms a bridge to the 30S subunit in the 70S ribosome.

This is one of the proteins that bind and probably mediate the attachment of the 5S RNA into the large ribosomal subunit, where it forms part of the central protuberance. In the 70S ribosome it contacts protein S13 of the 30S subunit (bridge B1b), connecting the 2 subunits; this bridge is implicated in subunit movement. May contact the P site tRNA; the 5S rRNA and some of its associated proteins might help stabilize positioning of ribosome-bound tRNAs. This chain is Large ribosomal subunit protein uL5, found in Methanococcus maripaludis (strain DSM 14266 / JCM 13030 / NBRC 101832 / S2 / LL).